We begin with the raw amino-acid sequence, 79 residues long: Acyl carrier protein 1 (79 aa).

The 76-residue stretch at 2–77 (DNIEQRVKKI…QAIDYARANV (76 aa)) folds into the Carrier domain. At Ser-37 the chain carries O-(pantetheine 4'-phosphoryl)serine.

This sequence belongs to the acyl carrier protein (ACP) family. Post-translationally, 4'-phosphopantetheine is transferred from CoA to a specific serine of apo-ACP by AcpS. This modification is essential for activity because fatty acids are bound in thioester linkage to the sulfhydryl of the prosthetic group.

It is found in the cytoplasm. The protein operates within lipid metabolism; fatty acid biosynthesis. Functionally, carrier of the growing fatty acid chain in fatty acid biosynthesis. This is Acyl carrier protein 1 from Ralstonia nicotianae (strain ATCC BAA-1114 / GMI1000) (Ralstonia solanacearum).